The primary structure comprises 217 residues: Somatotropin (217 aa).

Residues 1-27 form the signal peptide; that stretch reads MMAAGPRTSLLLAFALLCLPWTQMVGA. His46 is a Zn(2+) binding site. An intrachain disulfide couples Cys79 to Cys190. At Ser132 the chain carries Phosphoserine. Zn(2+) is bound at residue Glu199. A disulfide bond links Cys207 and Cys215.

It belongs to the somatotropin/prolactin family.

The protein resides in the secreted. Functionally, plays an important role in growth control. Its major role in stimulating body growth is to stimulate the liver and other tissues to secrete IGF1. It stimulates both the differentiation and proliferation of myoblasts. It also stimulates amino acid uptake and protein synthesis in muscle and other tissues. The protein is Somatotropin (GH1) of Giraffa camelopardalis (Giraffe).